The primary structure comprises 176 residues: MNPLDKIHALDEIEKEIILCMQSAGQALQELGKEKSSQKNAETQSQQFLKSLSSVESKLSEQINYLTQVSTGQPHEGSGYASAKVLQMAWHRIQHARSRVRELEETKAKHSHAARQQLKRQQEHAAAQQQQQQQQQQQQQQQQMQQAAQQQQQQTGGGNAGSGDHPMGGDSSMSTN.

A disordered region spans residues Ser98–Asn176. The span at Arg99–Ala108 shows a compositional bias: basic and acidic residues. The segment covering His124–Gln154 has biased composition (low complexity).

This sequence belongs to the Mediator complex subunit 11 family. In terms of assembly, component of the Mediator complex, which may include CDK8, MED4, MED6, MED11, MED14, MED17, MED18, MED20, MED21, MED22, MED27, MED28, MED30 and MED31.

Its subcellular location is the nucleus. Functionally, component of the Mediator complex, a coactivator involved in the regulated transcription of nearly all RNA polymerase II-dependent genes. Mediator functions as a bridge to convey information from gene-specific regulatory proteins to the basal RNA polymerase II transcription machinery. Mediator is recruited to promoters by direct interactions with regulatory proteins and serves as a scaffold for the assembly of a functional pre-initiation complex with RNA polymerase II and the general transcription factors. This Drosophila melanogaster (Fruit fly) protein is Mediator of RNA polymerase II transcription subunit 11 (MED11).